The primary structure comprises 172 residues: Adenine phosphoribosyltransferase (172 aa).

Belongs to the purine/pyrimidine phosphoribosyltransferase family. As to quaternary structure, homodimer.

It is found in the cytoplasm. The enzyme catalyses AMP + diphosphate = 5-phospho-alpha-D-ribose 1-diphosphate + adenine. It functions in the pathway purine metabolism; AMP biosynthesis via salvage pathway; AMP from adenine: step 1/1. In terms of biological role, catalyzes a salvage reaction resulting in the formation of AMP, that is energically less costly than de novo synthesis. This is Adenine phosphoribosyltransferase from Polynucleobacter necessarius subsp. necessarius (strain STIR1).